We begin with the raw amino-acid sequence, 206 residues long: Ribosomal RNA large subunit methyltransferase E (206 aa).

The S-adenosyl-L-methionine site is built by G60, W62, D80, D96, and D121. K161 acts as the Proton acceptor in catalysis.

Belongs to the class I-like SAM-binding methyltransferase superfamily. RNA methyltransferase RlmE family.

The protein resides in the cytoplasm. The catalysed reaction is uridine(2552) in 23S rRNA + S-adenosyl-L-methionine = 2'-O-methyluridine(2552) in 23S rRNA + S-adenosyl-L-homocysteine + H(+). Functionally, specifically methylates the uridine in position 2552 of 23S rRNA at the 2'-O position of the ribose in the fully assembled 50S ribosomal subunit. This Hydrogenovibrio crunogenus (strain DSM 25203 / XCL-2) (Thiomicrospira crunogena) protein is Ribosomal RNA large subunit methyltransferase E.